Here is a 456-residue protein sequence, read N- to C-terminus: NADH oxidase (456 aa).

An FAD-binding site is contributed by Asn10. The active-site Proton acceptor is His11. The FAD site is built by Ala12, Asp34, Gln35, Cys44, Val81, Ala110, Ser113, Lys143, and Tyr170. Cys44 serves as the catalytic Redox-active. Cys44 bears the Cysteine sulfinic acid (-SO2H) mark. Residues Ile171, Asp190, Tyr199, and Gly254 each coordinate NAD(+). Asp292 serves as a coordination point for FAD. Ala308 contributes to the NAD(+) binding site. Residues Leu309, Ala310, and Ser311 each contribute to the FAD site. Gly339 is an NAD(+) binding site. Residue Phe436 coordinates FAD.

FAD is required as a cofactor.

It carries out the reaction 2 NADH + O2 + 2 H(+) = 2 NAD(+) + 2 H2O. Catalyzes the four-electron reduction of molecular oxygen to water. The chain is NADH oxidase from Streptococcus pyogenes serotype M6 (strain ATCC BAA-946 / MGAS10394).